The chain runs to 282 residues: Bifunctional protein FolD (282 aa).

Residues 162–164 (GRS), S187, and V228 contribute to the NADP(+) site.

Belongs to the tetrahydrofolate dehydrogenase/cyclohydrolase family. As to quaternary structure, homodimer.

The enzyme catalyses (6R)-5,10-methylene-5,6,7,8-tetrahydrofolate + NADP(+) = (6R)-5,10-methenyltetrahydrofolate + NADPH. It carries out the reaction (6R)-5,10-methenyltetrahydrofolate + H2O = (6R)-10-formyltetrahydrofolate + H(+). It participates in one-carbon metabolism; tetrahydrofolate interconversion. In terms of biological role, catalyzes the oxidation of 5,10-methylenetetrahydrofolate to 5,10-methenyltetrahydrofolate and then the hydrolysis of 5,10-methenyltetrahydrofolate to 10-formyltetrahydrofolate. The polypeptide is Bifunctional protein FolD (Thermus thermophilus (strain ATCC 27634 / DSM 579 / HB8)).